We begin with the raw amino-acid sequence, 176 residues long: Small ribosomal subunit protein uS5 (176 aa).

Residues 18–81 form the S5 DRBM domain; it reads FEEKMLFVNR…SIARKNMISV (64 aa).

Belongs to the universal ribosomal protein uS5 family. In terms of assembly, part of the 30S ribosomal subunit. Contacts proteins S4 and S8.

With S4 and S12 plays an important role in translational accuracy. In terms of biological role, located at the back of the 30S subunit body where it stabilizes the conformation of the head with respect to the body. This Deinococcus deserti (strain DSM 17065 / CIP 109153 / LMG 22923 / VCD115) protein is Small ribosomal subunit protein uS5.